We begin with the raw amino-acid sequence, 362 residues long: Methionine import ATP-binding protein MetN (362 aa).

Positions 2–241 (IHIENLSKTY…PRHEVTRAMV (240 aa)) constitute an ABC transporter domain. 38–45 (GPSGAGKS) lines the ATP pocket.

Belongs to the ABC transporter superfamily. Methionine importer (TC 3.A.1.24) family. The complex is composed of two ATP-binding proteins (MetN), two transmembrane proteins (MetI) and a solute-binding protein (MetQ).

The protein resides in the cell inner membrane. The catalysed reaction is L-methionine(out) + ATP + H2O = L-methionine(in) + ADP + phosphate + H(+). It carries out the reaction D-methionine(out) + ATP + H2O = D-methionine(in) + ADP + phosphate + H(+). Part of the ABC transporter complex MetNIQ involved in methionine import. Responsible for energy coupling to the transport system. This chain is Methionine import ATP-binding protein MetN, found in Bordetella bronchiseptica (strain ATCC BAA-588 / NCTC 13252 / RB50) (Alcaligenes bronchisepticus).